The chain runs to 69 residues: DNA-directed RNA polymerase subunit omega (69 aa).

This sequence belongs to the RNA polymerase subunit omega family. As to quaternary structure, the RNAP catalytic core consists of 2 alpha, 1 beta, 1 beta' and 1 omega subunit. When a sigma factor is associated with the core the holoenzyme is formed, which can initiate transcription.

The catalysed reaction is RNA(n) + a ribonucleoside 5'-triphosphate = RNA(n+1) + diphosphate. Promotes RNA polymerase assembly. Latches the N- and C-terminal regions of the beta' subunit thereby facilitating its interaction with the beta and alpha subunits. The polypeptide is DNA-directed RNA polymerase subunit omega (Pelotomaculum thermopropionicum (strain DSM 13744 / JCM 10971 / SI)).